The chain runs to 338 residues: MSDFDSNPFADPDLNNPFKDPSVTQVTRNVPPGLDEYNPFSDSRTPPPGGVKMPNVPNTQPAIMKPTEEHPAYTQIAKEHALAQAELLKRQEELERKAAELDRREREMQNLSQHGRKNNWPPLPSNFPVGPCFYQDFSVDIPVEFQKTVKLMYYLWMFHAVTLFLNIFGCLAWFCVDSARAVDFGLSILWFLLFTPCSFVCWYRPLYGAFRSDSSFRFFVFFFVYICQFAVHVLQAAGFHNWGNCGWISSLTGLNQNIPVGIMMIIIAALFTASAVISLVMFKKVHGLYRTTGASFEKAQQEFATGVMSNKTVQTAAANAASTAASSAAQNAFKGNQI.

The interval 1–64 (MSDFDSNPFA…NVPNTQPAIM (64 aa)) is disordered. Residue Ser2 is modified to N-acetylserine. Residue Ser2 is modified to Phosphoserine. The Cytoplasmic segment spans residues 2 to 155 (SDFDSNPFAD…QKTVKLMYYL (154 aa)). Residue Thr45 is modified to Phosphothreonine. The helical transmembrane segment at 156–176 (WMFHAVTLFLNIFGCLAWFCV) threads the bilayer. At 177–181 (DSARA) the chain is on the lumenal side. A helical transmembrane segment spans residues 182–202 (VDFGLSILWFLLFTPCSFVCW). Topologically, residues 203–218 (YRPLYGAFRSDSSFRF) are cytoplasmic. The chain crosses the membrane as a helical span at residues 219–239 (FVFFFVYICQFAVHVLQAAGF). The Lumenal portion of the chain corresponds to 240-261 (HNWGNCGWISSLTGLNQNIPVG). A helical membrane pass occupies residues 262-282 (IMMIIIAALFTASAVISLVMF). At 283–338 (KKVHGLYRTTGASFEKAQQEFATGVMSNKTVQTAAANAASTAASSAAQNAFKGNQI) the chain is on the cytoplasmic side.

Belongs to the SCAMP family. As to quaternary structure, interacts with SYNRG and ITSN1. Interacts with SLC9A7. As to expression, widely expressed, with highest expression in brain.

The protein localises to the golgi apparatus. It localises to the trans-Golgi network membrane. It is found in the recycling endosome membrane. Functionally, functions in post-Golgi recycling pathways. Acts as a recycling carrier to the cell surface. This chain is Secretory carrier-associated membrane protein 1 (SCAMP1), found in Homo sapiens (Human).